A 138-amino-acid chain; its full sequence is Large ribosomal subunit protein uL16 (138 aa).

The tract at residues 1-29 is disordered; the sequence is MSLLQPRKVKWRKPQKGRTKGKATRRNQV. Positions 7–25 are enriched in basic residues; that stretch reads RKVKWRKPQKGRTKGKATR.

This sequence belongs to the universal ribosomal protein uL16 family. As to quaternary structure, part of the 50S ribosomal subunit.

Binds 23S rRNA and is also seen to make contacts with the A and possibly P site tRNAs. The polypeptide is Large ribosomal subunit protein uL16 (Sulfurihydrogenibium sp. (strain YO3AOP1)).